The following is a 150-amino-acid chain: Dihydroneopterin triphosphate diphosphatase (150 aa).

Residues 5–146 (VYKRPVSILV…SNRQAIEQFV (142 aa)) form the Nudix hydrolase domain. Residues Lys-7, Arg-29, and Thr-40 each contribute to the substrate site. The Nudix box signature appears at 41-62 (GSVEEGETAPQAAMREVKEEVT). Mg(2+)-binding residues include Glu-56 and Glu-60. 81–84 (FEIF) provides a ligand contact to substrate. Mg(2+) is bound at residue Glu-117. Residue Ser-135 participates in substrate binding.

It belongs to the Nudix hydrolase family. Mg(2+) is required as a cofactor.

It carries out the reaction 7,8-dihydroneopterin 3'-triphosphate + H2O = 7,8-dihydroneopterin 3'-phosphate + diphosphate + H(+). Functionally, catalyzes the hydrolysis of dihydroneopterin triphosphate to dihydroneopterin monophosphate and pyrophosphate. Required for efficient folate biosynthesis. Can also hydrolyze nucleoside triphosphates with a preference for dATP. This chain is Dihydroneopterin triphosphate diphosphatase (nudB), found in Escherichia coli O157:H7.